The primary structure comprises 440 residues: Transposon Ty1-DR1 Gag polyprotein (440 aa).

Composition is skewed to polar residues over residues 1–10 (MESQQLSNYP), 48–60 (TKAN…TPAS), and 127–152 (QSQF…GNTF). Disordered stretches follow at residues 1 to 93 (MESQ…MMTQ), 126 to 173 (PQSQ…RPPP), and 352 to 440 (GSRN…PGTY). Residues 153-165 (TDSSSADSDMTST) are compositionally biased toward low complexity. Residues 299–401 (NNGIHINNKV…NSKSKTARAH (103 aa)) are RNA-binding. A compositionally biased stretch (low complexity) spans 402 to 418 (NVSTSNNSPSTDNDSIS). The residue at position 416 (Ser416) is a Phosphoserine. The span at 419–428 (KSTTEPIQLN) shows a compositional bias: polar residues. The span at 429-440 (NKHDLHLRPGTY) shows a compositional bias: basic and acidic residues.

As to quaternary structure, homotrimer.

The protein localises to the cytoplasm. Its function is as follows. Capsid protein (CA) is the structural component of the virus-like particle (VLP), forming the shell that encapsulates the retrotransposons dimeric RNA genome. The particles are assembled from trimer-clustered units and there are holes in the capsid shells that allow for the diffusion of macromolecules. CA also has nucleocapsid-like chaperone activity, promoting primer tRNA(i)-Met annealing to the multipartite primer-binding site (PBS), dimerization of Ty1 RNA and initiation of reverse transcription. The sequence is that of Transposon Ty1-DR1 Gag polyprotein (TY1A-DR1) from Saccharomyces cerevisiae (strain ATCC 204508 / S288c) (Baker's yeast).